Here is a 497-residue protein sequence, read N- to C-terminus: Type II secretion system protein E (497 aa).

255-262 (GPTGSGKS) serves as a coordination point for ATP. Cys388, Cys391, Cys419, and Cys422 together coordinate Zn(2+).

The protein belongs to the GSP E family. In terms of assembly, forms homooligomers; most probably hexamers. Interacts with PulL/GspL. Zn(2+) is required as a cofactor.

The protein localises to the cell inner membrane. The enzyme catalyses ATP + H2O + cellular proteinSide 1 = ADP + phosphate + cellular proteinSide 2.. ATPase component of the type II secretion system required for the energy-dependent secretion of extracellular factors such as proteases and toxins from the periplasm. Acts as a molecular motor to provide the energy that is required for assembly of the pseudopilus and the extrusion of substrates generated in the cytoplasm. This Klebsiella pneumoniae protein is Type II secretion system protein E (pulE).